The sequence spans 372 residues: UDP-N-acetylglucosamine--N-acetylmuramyl-(pentapeptide) pyrophosphoryl-undecaprenol N-acetylglucosamine transferase (372 aa).

UDP-N-acetyl-alpha-D-glucosamine is bound by residues 16-18 (TGG), N128, R164, S192, I250, and Q295.

The protein belongs to the glycosyltransferase 28 family. MurG subfamily.

The protein resides in the cell inner membrane. The enzyme catalyses di-trans,octa-cis-undecaprenyl diphospho-N-acetyl-alpha-D-muramoyl-L-alanyl-D-glutamyl-meso-2,6-diaminopimeloyl-D-alanyl-D-alanine + UDP-N-acetyl-alpha-D-glucosamine = di-trans,octa-cis-undecaprenyl diphospho-[N-acetyl-alpha-D-glucosaminyl-(1-&gt;4)]-N-acetyl-alpha-D-muramoyl-L-alanyl-D-glutamyl-meso-2,6-diaminopimeloyl-D-alanyl-D-alanine + UDP + H(+). Its pathway is cell wall biogenesis; peptidoglycan biosynthesis. Functionally, cell wall formation. Catalyzes the transfer of a GlcNAc subunit on undecaprenyl-pyrophosphoryl-MurNAc-pentapeptide (lipid intermediate I) to form undecaprenyl-pyrophosphoryl-MurNAc-(pentapeptide)GlcNAc (lipid intermediate II). The polypeptide is UDP-N-acetylglucosamine--N-acetylmuramyl-(pentapeptide) pyrophosphoryl-undecaprenol N-acetylglucosamine transferase (Paraburkholderia phytofirmans (strain DSM 17436 / LMG 22146 / PsJN) (Burkholderia phytofirmans)).